We begin with the raw amino-acid sequence, 59 residues long: Probable stress-associated endoplasmic reticulum protein (59 aa).

The segment at 1–30 is disordered; sequence MSQSRTLRQKSQKYQENIEKRGVASPKKKE. Over 1–34 the chain is Cytoplasmic; the sequence is MSQSRTLRQKSQKYQENIEKRGVASPKKKEDGLN. A compositionally biased stretch (basic and acidic residues) spans 16–30; it reads ENIEKRGVASPKKKE. The helical; Anchor for type IV membrane protein transmembrane segment at 35-55 threads the bilayer; it reads INPYVLGFIIFVVVGSTLLQI. Over 56–59 the chain is Extracellular; sequence LKGQ.

This sequence belongs to the RAMP4 family.

The protein localises to the membrane. Its subcellular location is the endoplasmic reticulum membrane. In terms of biological role, may interact with target proteins during translocation into the lumen of the endoplasmic reticulum. May protect unfolded target proteins against degradation and facilitate correct glycosylation. This Dictyostelium discoideum (Social amoeba) protein is Probable stress-associated endoplasmic reticulum protein (serp).